Reading from the N-terminus, the 354-residue chain is Uroporphyrinogen decarboxylase (354 aa).

Substrate is bound by residues 27–31 (RQAGR), aspartate 77, tyrosine 154, threonine 209, and histidine 327.

It belongs to the uroporphyrinogen decarboxylase family. Homodimer.

Its subcellular location is the cytoplasm. The catalysed reaction is uroporphyrinogen III + 4 H(+) = coproporphyrinogen III + 4 CO2. It participates in porphyrin-containing compound metabolism; protoporphyrin-IX biosynthesis; coproporphyrinogen-III from 5-aminolevulinate: step 4/4. Its function is as follows. Catalyzes the decarboxylation of four acetate groups of uroporphyrinogen-III to yield coproporphyrinogen-III. In Salmonella dublin (strain CT_02021853), this protein is Uroporphyrinogen decarboxylase.